We begin with the raw amino-acid sequence, 580 residues long: Ran GTPase-activating protein 1 (580 aa).

7 LRR repeats span residues 48–71, 111–134, 141–168, 207–230, 235–258, 292–315, and 320–343; these read YEGL…AIAE, GAQL…GFEA, CFTL…ALTE, IGTL…ALAE, NSLL…AMAE, LHKL…SLAE, and KSDL…QVQE. Residues 356–429 are disordered; it reads SLSDDEDEDD…PPKLPVDAST (74 aa). The segment covering 358–399 has biased composition (acidic residues); the sequence is SDDEDEDDDDDDEDDDDDEDDENDDEEVEEEEEEVEEEEGGD.

This sequence belongs to the RNA1 family. In terms of assembly, homodimer. Identified in a complex with RANBP2 and the ubiquitin-conjugating enzyme E2 (UBE2I). In terms of processing, may be sumoylated.

Its subcellular location is the cytoplasm. It localises to the nucleus. It is found in the nucleoplasm. The protein resides in the nucleus envelope. The protein localises to the chromosome. Its subcellular location is the centromere. It localises to the kinetochore. It is found in the cytoskeleton. The protein resides in the spindle. GTPase activator for RAN, converting it to the GDP-bound state. Converts cytoplasmic GTP-bound RAN to GDP-bound RAN, which is required for RAN-mediated nuclear import and export. The protein is Ran GTPase-activating protein 1 (rangap1) of Xenopus laevis (African clawed frog).